The following is a 246-amino-acid chain: UPF0309 protein TTE0306 (246 aa).

The SIS domain occupies 31 to 212; it reads ITESLISEDS…EAEIITNMLE (182 aa).

It belongs to the UPF0309 family.

This chain is UPF0309 protein TTE0306, found in Caldanaerobacter subterraneus subsp. tengcongensis (strain DSM 15242 / JCM 11007 / NBRC 100824 / MB4) (Thermoanaerobacter tengcongensis).